The primary structure comprises 155 residues: Small ribosomal subunit protein uS7c (155 aa).

It belongs to the universal ribosomal protein uS7 family. In terms of assembly, part of the 30S ribosomal subunit.

Its subcellular location is the plastid. It is found in the chloroplast. Functionally, one of the primary rRNA binding proteins, it binds directly to 16S rRNA where it nucleates assembly of the head domain of the 30S subunit. The chain is Small ribosomal subunit protein uS7c (rps7) from Aristolochia macrophylla (Dutchman's pipe vine).